The sequence spans 549 residues: Glutamyl-tRNA(Gln) amidotransferase subunit B, mitochondrial (549 aa).

A mitochondrion-targeting transit peptide spans 1-23 (MLRISRDTKIVARVTHVTKSRTY).

It belongs to the GatB/GatE family. GatB subfamily. Subunit of the heterotrimeric GatFAB amidotransferase (AdT) complex, composed of A, B and F subunits.

The protein localises to the mitochondrion. The enzyme catalyses L-glutamyl-tRNA(Gln) + L-glutamine + ATP + H2O = L-glutaminyl-tRNA(Gln) + L-glutamate + ADP + phosphate + H(+). In terms of biological role, allows the formation of correctly charged Gln-tRNA(Gln) through the transamidation of misacylated Glu-tRNA(Gln) in the mitochondria. The reaction takes place in the presence of glutamine and ATP through an activated gamma-phospho-Glu-tRNA(Gln). The protein is Glutamyl-tRNA(Gln) amidotransferase subunit B, mitochondrial of Yarrowia lipolytica (strain CLIB 122 / E 150) (Yeast).